A 597-amino-acid polypeptide reads, in one-letter code: Aspartate--tRNA(Asp/Asn) ligase (597 aa).

Glu175 lines the L-aspartate pocket. The aspartate stretch occupies residues 199–202 (QLFK). Residue Arg221 participates in L-aspartate binding. Residues 221 to 223 (RDE) and Gln230 contribute to the ATP site. Residue His453 coordinates L-aspartate. ATP is bound at residue Glu487. Arg494 provides a ligand contact to L-aspartate. 539 to 542 (GWDR) serves as a coordination point for ATP. Residues 562–597 (SGGGVDPLTDAPAPITPEQRKESGIDAKPKKKETKN) form a disordered region. A compositionally biased stretch (basic and acidic residues) spans 579 to 589 (EQRKESGIDAK).

It belongs to the class-II aminoacyl-tRNA synthetase family. Type 1 subfamily. Homodimer.

The protein resides in the cytoplasm. It carries out the reaction tRNA(Asx) + L-aspartate + ATP = L-aspartyl-tRNA(Asx) + AMP + diphosphate. Its function is as follows. Aspartyl-tRNA synthetase with relaxed tRNA specificity since it is able to aspartylate not only its cognate tRNA(Asp) but also tRNA(Asn). Reaction proceeds in two steps: L-aspartate is first activated by ATP to form Asp-AMP and then transferred to the acceptor end of tRNA(Asp/Asn). The protein is Aspartate--tRNA(Asp/Asn) ligase of Corynebacterium kroppenstedtii (strain DSM 44385 / JCM 11950 / CIP 105744 / CCUG 35717).